We begin with the raw amino-acid sequence, 274 residues long: Large ribosomal subunit protein uL2 (274 aa).

2 disordered regions span residues 34 to 54 (LEKK…TRHI) and 224 to 261 (VAMN…KTRA).

It belongs to the universal ribosomal protein uL2 family. In terms of assembly, part of the 50S ribosomal subunit. Forms a bridge to the 30S subunit in the 70S ribosome.

Its function is as follows. One of the primary rRNA binding proteins. Required for association of the 30S and 50S subunits to form the 70S ribosome, for tRNA binding and peptide bond formation. It has been suggested to have peptidyltransferase activity; this is somewhat controversial. Makes several contacts with the 16S rRNA in the 70S ribosome. This Ectopseudomonas mendocina (strain ymp) (Pseudomonas mendocina) protein is Large ribosomal subunit protein uL2.